The chain runs to 475 residues: Ribulose bisphosphate carboxylase large chain (475 aa).

Positions Met-1 to Ser-2 are excised as a propeptide. Pro-3 carries the N-acetylproline modification. The residue at position 14 (Lys-14) is an N6,N6,N6-trimethyllysine. Residues Asn-123 and Thr-173 each contribute to the substrate site. Catalysis depends on Lys-175, which acts as the Proton acceptor. Position 177 (Lys-177) interacts with substrate. Residues Lys-201, Asp-203, and Glu-204 each contribute to the Mg(2+) site. Lys-201 is modified (N6-carboxylysine). The active-site Proton acceptor is the His-294. Substrate contacts are provided by Arg-295, His-327, and Ser-379.

This sequence belongs to the RuBisCO large chain family. Type I subfamily. Heterohexadecamer of 8 large chains and 8 small chains; disulfide-linked. The disulfide link is formed within the large subunit homodimers. Mg(2+) is required as a cofactor. The disulfide bond which can form in the large chain dimeric partners within the hexadecamer appears to be associated with oxidative stress and protein turnover.

Its subcellular location is the plastid. It is found in the chloroplast. The catalysed reaction is 2 (2R)-3-phosphoglycerate + 2 H(+) = D-ribulose 1,5-bisphosphate + CO2 + H2O. It carries out the reaction D-ribulose 1,5-bisphosphate + O2 = 2-phosphoglycolate + (2R)-3-phosphoglycerate + 2 H(+). Its function is as follows. RuBisCO catalyzes two reactions: the carboxylation of D-ribulose 1,5-bisphosphate, the primary event in carbon dioxide fixation, as well as the oxidative fragmentation of the pentose substrate in the photorespiration process. Both reactions occur simultaneously and in competition at the same active site. The polypeptide is Ribulose bisphosphate carboxylase large chain (Gossypium hirsutum (Upland cotton)).